The following is a 261-amino-acid chain: Lys-63-specific deubiquitinase BRCC36 (261 aa).

In terms of domain architecture, MPN spans 6 to 149 (VHIQGDAFLV…YTCFQSVQAQ (144 aa)). Zn(2+) is bound by residues His-92, His-94, and Asp-105. A JAMM motif motif is present at residues 92–105 (HSHPHITVWPSHVD).

This sequence belongs to the peptidase M67A family. BRCC36 subfamily. In terms of assembly, component of the BRCA1-A complex, at least composed of brca1, bard1, uimc1/rap80, abraxas1, brcc3/brcc36, babam2 and babam1/nba1. In the BRCA1-A complex, interacts directly with ABRAXAS1 and babam2. Component of the BRISC complex, at least composed of ABRAXAS2, brcc3/brcc36, babam2 and babam1/nba1. Within the complex, interacts directly with abraxas2. Both the BRCA1-A complex and the BRISC complex bind polyubiquitin. Requires Zn(2+) as cofactor.

It is found in the nucleus. Its subcellular location is the cytoplasm. The protein resides in the cytoskeleton. It localises to the spindle pole. Its function is as follows. Metalloprotease that specifically cleaves 'Lys-63'-linked polyubiquitin chains. Does not have activity toward 'Lys-48'-linked polyubiquitin chains. Component of the BRCA1-A complex, a complex that specifically recognizes 'Lys-63'-linked ubiquitinated histones H2A and H2AX at DNA lesions sites, leading to target the brca1-bard1 heterodimer to sites of DNA damage at double-strand breaks (DSBs). In the BRCA1-A complex, it specifically removes 'Lys-63'-linked ubiquitin on histones H2A and H2AX, antagonizing the rnf8-dependent ubiquitination at double-strand breaks (DSBs). Catalytic subunit of the BRISC complex, a multiprotein complex that specifically cleaves 'Lys-63'-linked ubiquitin in various substrates. Mediates the specific 'Lys-63'-specific deubiquitination associated with the COP9 signalosome complex (CSN), via the interaction of the BRISC complex with the CSN complex. The BRISC complex is required for normal mitotic spindle assembly and microtubule attachment to kinetochores via its role in deubiquitinating numa1. Plays a role in interferon signaling via its role in the deubiquitination of the interferon receptor ifnar1; deubiquitination increases ifnar1 activity by enhancing its stability and cell surface expression. Acts as a regulator of the NLRP3 inflammasome by mediating deubiquitination of nlrp3. Down-regulates the response to bacterial lipopolysaccharide (LPS) via its role in ifnar1 deubiquitination. The chain is Lys-63-specific deubiquitinase BRCC36 (brcc3) from Xenopus laevis (African clawed frog).